Consider the following 406-residue polypeptide: Mitochondrial ribosome-associated GTPase 2 (406 aa).

The segment at 15-406 is localized in the mitochondria; that stretch reads FQGVGHWALS…LGQGRQPLRW (392 aa). Residues 30 to 406 form a not localized in the mitochondria region; it reads KPSRLLPQRA…LGQGRQPLRW (377 aa). Residues 70 to 224 enclose the Obg domain; the sequence is RYFVDYRRVL…RVLHLELKTV (155 aa). The OBG-type G domain maps to 225 to 390; it reads AHAGMVGFPN…LLLHLKVLYD (166 aa). GTP contacts are provided by residues 231-238, 256-260, 278-281, 345-348, and 371-373; these read GFPNAGKS, FTTLK, DIPG, NKID, and SAL. Mg(2+)-binding residues include serine 238 and threonine 258.

Belongs to the TRAFAC class OBG-HflX-like GTPase superfamily. OBG GTPase family. In terms of assembly, associates with the mitochondrial ribosome large subunit; the association occurs in a GTP-dependent manner. The cofactor is Mg(2+).

The protein localises to the mitochondrion. Its subcellular location is the mitochondrion inner membrane. In terms of biological role, plays a role in the regulation of the mitochondrial ribosome assembly and of translational activity. Displays GTPase activity. Involved in the ribosome maturation process. The polypeptide is Mitochondrial ribosome-associated GTPase 2 (MTG2) (Homo sapiens (Human)).